We begin with the raw amino-acid sequence, 159 residues long: Phosphopantetheine adenylyltransferase (159 aa).

A substrate-binding site is contributed by threonine 10. Residues 10-11 and histidine 18 contribute to the ATP site; that span reads TF. Positions 42, 74, and 88 each coordinate substrate. Residues 89–91, glutamate 99, and 124–130 each bind ATP; these read GLR and WSFISSS.

Belongs to the bacterial CoaD family. Homohexamer. Mg(2+) is required as a cofactor.

The protein resides in the cytoplasm. The catalysed reaction is (R)-4'-phosphopantetheine + ATP + H(+) = 3'-dephospho-CoA + diphosphate. The protein operates within cofactor biosynthesis; coenzyme A biosynthesis; CoA from (R)-pantothenate: step 4/5. In terms of biological role, reversibly transfers an adenylyl group from ATP to 4'-phosphopantetheine, yielding dephospho-CoA (dPCoA) and pyrophosphate. This chain is Phosphopantetheine adenylyltransferase, found in Escherichia coli (strain SMS-3-5 / SECEC).